Here is a 559-residue protein sequence, read N- to C-terminus: T-complex protein 1 subunit gamma (559 aa).

C369 and C375 are disulfide-bonded. The segment at 537–559 (GGASVTDGNGQEIPETFGDARDG) is disordered.

It belongs to the TCP-1 chaperonin family. Heterooligomeric complex of about 850 to 900 kDa that forms two stacked rings, 12 to 16 nm in diameter.

The protein localises to the cytoplasm. Molecular chaperone; assists the folding of proteins upon ATP hydrolysis. Known to play a role, in vitro, in the folding of actin and tubulin. This chain is T-complex protein 1 subunit gamma, found in Tetrahymena pyriformis.